Reading from the N-terminus, the 244-residue chain is MSESASKTPGSYSRVMLKISGEALMGDQGYGLHPPTVARIAQEVKSVHDMGIEICMVIGGGNIFRGLQGSAQGMERATADYMGMLATVMNALAMQAALEALKIHTRVISAIRMDEVAEPYIRRRAVRHLEKKRVCIFAAGTGNPYFTTDTAATLRANEMNCEAIFKGTKVDGVYDKDPNKFPDAKRYDDVTYDEVLQKHLGVMDASAIALARDNDLPIIVFSLDEPGGFRGILAGSGTYTRVHG.

18–21 (KISG) provides a ligand contact to ATP. The segment at 26 to 31 (GDQGYG) is involved in allosteric activation by GTP. Gly60 lines the UMP pocket. Residues Gly61 and Arg65 each coordinate ATP. Residues Asp80 and 141–148 (TGNPYFTT) contribute to the UMP site. ATP contacts are provided by Thr168, Tyr174, and Asp177.

It belongs to the UMP kinase family. As to quaternary structure, homohexamer.

Its subcellular location is the cytoplasm. It carries out the reaction UMP + ATP = UDP + ADP. Its pathway is pyrimidine metabolism; CTP biosynthesis via de novo pathway; UDP from UMP (UMPK route): step 1/1. Allosterically activated by GTP. Inhibited by UTP. Its function is as follows. Catalyzes the reversible phosphorylation of UMP to UDP. This chain is Uridylate kinase, found in Paracoccus denitrificans (strain Pd 1222).